An 84-amino-acid chain; its full sequence is Exodeoxyribonuclease 7 small subunit (84 aa).

This sequence belongs to the XseB family. As to quaternary structure, heterooligomer composed of large and small subunits.

The protein localises to the cytoplasm. The catalysed reaction is Exonucleolytic cleavage in either 5'- to 3'- or 3'- to 5'-direction to yield nucleoside 5'-phosphates.. Functionally, bidirectionally degrades single-stranded DNA into large acid-insoluble oligonucleotides, which are then degraded further into small acid-soluble oligonucleotides. In Yersinia enterocolitica serotype O:8 / biotype 1B (strain NCTC 13174 / 8081), this protein is Exodeoxyribonuclease 7 small subunit.